The primary structure comprises 349 residues: Phosphoribosylformylglycinamidine cyclo-ligase (349 aa).

This sequence belongs to the AIR synthase family.

The protein localises to the cytoplasm. The catalysed reaction is 2-formamido-N(1)-(5-O-phospho-beta-D-ribosyl)acetamidine + ATP = 5-amino-1-(5-phospho-beta-D-ribosyl)imidazole + ADP + phosphate + H(+). Its pathway is purine metabolism; IMP biosynthesis via de novo pathway; 5-amino-1-(5-phospho-D-ribosyl)imidazole from N(2)-formyl-N(1)-(5-phospho-D-ribosyl)glycinamide: step 2/2. In Jannaschia sp. (strain CCS1), this protein is Phosphoribosylformylglycinamidine cyclo-ligase.